The sequence spans 94 residues: HssA/B-like protein 49 (94 aa).

Positions 1–20 (MTLFSSISSISNPMTSSKSS) are disordered.

The protein belongs to the hssA/B family.

The polypeptide is HssA/B-like protein 49 (hssl49) (Dictyostelium discoideum (Social amoeba)).